Consider the following 505-residue polypeptide: Metal transporter Nramp3.2 (505 aa).

The next 12 helical transmembrane spans lie at 50-70 (LWLF…PGNL), 78-98 (AIAG…GLLV), 127-147 (MVLW…EVIG), 159-179 (FVPL…FLFL), 187-207 (LEAV…WMFA), 233-253 (AVGV…SALV), 280-300 (ALVI…KGFY), 321-341 (YGGG…AAGQ), 369-389 (ALIT…VFDT), 400-420 (WLNV…LCLV), 439-459 (AWLV…DFFF), and 466-486 (AFTT…IYLI).

It belongs to the NRAMP (TC 2.A.55) family. Expressed in roots, stems, buds and leaves.

The protein localises to the vacuole membrane. It catalyses the reaction Mn(2+)(in) = Mn(2+)(out). The enzyme catalyses Fe(2+)(in) = Fe(2+)(out). Divalent metal transporter. Can transport manganese (Mn) and iron (Fe). Involved in the release of metals stored in the vacuole. This is Metal transporter Nramp3.2 from Populus trichocarpa (Western balsam poplar).